Here is a 2082-residue protein sequence, read N- to C-terminus: Polyketide synthase ThaQ (2082 aa).

A disordered region spans residues 398-468; it reads NDARRAGSAR…DSAHDSAHAA (71 aa). Composition is skewed to basic and acidic residues over residues 399 to 411, 419 to 430, and 439 to 468; these read DARR…RDAR, HGARHEAAHDAQ, and ADAH…AHAA. Positions 470–546 constitute a Carrier 1 domain; sequence ALRREGRAYL…ALLDHLLAAH (77 aa). Ser507 is subject to O-(pantetheine 4'-phosphoryl)serine. Low complexity-rich tracts occupy residues 560-582 and 593-605; these read APAR…RAAP and DTPS…APAR. Residues 560–655 form a disordered region; sequence APARGVGARA…RYAPRAPHPD (96 aa). The segment covering 606-631 has biased composition (pro residues); it reads PDQPAPSGPPAQPAQPAPRADTPPPA. Residues 658-1077 enclose the Ketosynthase family 3 (KS3) domain; that stretch reads AEPVAIIGIS…GVNAHVVLEE (420 aa). Disordered regions lie at residues 1250-1269 and 1603-1653; these read APGT…EAAE and ARGP…VKSD. Composition is skewed to low complexity over residues 1256–1269 and 1612–1624; these read ASAG…EAAE and SPDA…RAQA. Residues 1640–1653 show a composition bias toward basic and acidic residues; sequence ADSKAGPKSEVKSD. One can recognise a Carrier 2 domain in the interval 1669–1743; it reads ASVAASVEDA…ALVRAVAEAV (75 aa). An O-(pantetheine 4'-phosphoryl)serine modification is found at Ser1703. Residues 1792–2022 enclose the AB hydrolase-1 domain; the sequence is PRVVLIPGLG…GAGHAVFLTH (231 aa). The span at 2045–2067 shows a compositional bias: low complexity; the sequence is GAAESVESVEATEAAEAARSPAV. The interval 2045–2082 is disordered; that stretch reads GAAESVESVEATEAAEAARSPAVARRRATDDAPVGSDA.

Requires pantetheine 4'-phosphate as cofactor.

Its subcellular location is the cytoplasm. It functions in the pathway antibiotic biosynthesis. Its function is as follows. Involved in production of the polyketide antibiotic thailandamide. This chain is Polyketide synthase ThaQ, found in Burkholderia thailandensis (strain ATCC 700388 / DSM 13276 / CCUG 48851 / CIP 106301 / E264).